The following is a 211-amino-acid chain: Large ribosomal subunit protein eL13 (211 aa).

Lys16 carries the N6-acetyllysine modification. 3 positions are modified to phosphoserine: Ser52, Ser77, and Ser106. Glycyl lysine isopeptide (Lys-Gly) (interchain with G-Cter in SUMO2) cross-links involve residues Lys123 and Lys145. Residue Lys174 forms a Glycyl lysine isopeptide (Lys-Gly) (interchain with G-Cter in SUMO1); alternate linkage. Glycyl lysine isopeptide (Lys-Gly) (interchain with G-Cter in SUMO2); alternate cross-links involve residues Lys174 and Lys177. Lys177 is modified (N6-acetyllysine; alternate).

The protein belongs to the eukaryotic ribosomal protein eL13 family. Component of the 60S large ribosomal subunit (LSU).

Its subcellular location is the cytoplasm. Functionally, component of the ribosome, a large ribonucleoprotein complex responsible for the synthesis of proteins in the cell. The small ribosomal subunit (SSU) binds messenger RNAs (mRNAs) and translates the encoded message by selecting cognate aminoacyl-transfer RNA (tRNA) molecules. The large subunit (LSU) contains the ribosomal catalytic site termed the peptidyl transferase center (PTC), which catalyzes the formation of peptide bonds, thereby polymerizing the amino acids delivered by tRNAs into a polypeptide chain. The nascent polypeptides leave the ribosome through a tunnel in the LSU and interact with protein factors that function in enzymatic processing, targeting, and the membrane insertion of nascent chains at the exit of the ribosomal tunnel. As part of the LSU, it is probably required for its formation and the maturation of rRNAs. Plays a role in bone development. This chain is Large ribosomal subunit protein eL13 (RPL13), found in Cricetulus griseus (Chinese hamster).